Consider the following 177-residue polypeptide: Bifunctional protein PyrR (177 aa).

Positions 99 to 111 (VVLVDDVLYTGRT) match the PRPP-binding motif.

It belongs to the purine/pyrimidine phosphoribosyltransferase family. PyrR subfamily. Homodimer and homohexamer; in equilibrium.

The enzyme catalyses UMP + diphosphate = 5-phospho-alpha-D-ribose 1-diphosphate + uracil. Its function is as follows. Regulates transcriptional attenuation of the pyrimidine nucleotide (pyr) operon by binding in a uridine-dependent manner to specific sites on pyr mRNA. This disrupts an antiterminator hairpin in the RNA and favors formation of a downstream transcription terminator, leading to a reduced expression of downstream genes. Also displays a weak uracil phosphoribosyltransferase activity which is not physiologically significant. The polypeptide is Bifunctional protein PyrR (Clostridioides difficile (strain 630) (Peptoclostridium difficile)).